Reading from the N-terminus, the 314-residue chain is Homeobox protein SIX3 (314 aa).

Positions 188 to 247 (GEQKTHCFKERTRSLLREWYLQDPYPNPSKKRELAQATGLTPTQVGNWFKNRRQRDRAAA) form a DNA-binding region, homeobox. 2 disordered regions span residues 214-233 (NPSKKRELAQATGLTPTQVG) and 240-314 (RQRD…ECDV). The span at 271-293 (PTHSSAESPSTAASPTTSVSSLT) shows a compositional bias: low complexity. Residues 298-314 (TGTSILSVTSSDSECDV) show a composition bias toward polar residues.

The protein belongs to the SIX/Sine oculis homeobox family.

Its subcellular location is the nucleus. Its function is as follows. Transcriptional regulator which can act as both a transcriptional repressor and activator by binding a ATTA homeodomain core recognition sequence on these target genes. During forebrain development represses WNT1 expression allowing zona limitans intrathalamica formation and thereby ensuring proper anterio-posterior patterning of the diencephalon and formation of the rostral diencephalon. Acts as a direct upstream activator of SHH expression in the rostral diencephalon ventral midline and that in turn SHH maintains its expression. In addition, Six3 activity is required for the formation of the telencephalon. During postnatal stages of brain development is necessary for ependymal cell maturation by promoting the maturation of radial glia into ependymal cells through regulation of neuroblast proliferation and migration. Acts on the proliferation and differentiation of neural progenitor cells through activating transcription of CCND1 and CCND2. During early lens formation plays a role in lens induction and specification by activating directly PAX6 in the presumptive lens ectoderm. In turn PAX6 activates SIX3 resulting in activation of PDGFRA and CCND1 promoting cell proliferation. Also is required for the neuroretina development by directly suppressing WNT8B expression in the anterior neural plate territory. Its action during retina development and lens morphogenesis is AES and TLE4-dependent manner. Furthermore, during eye development regulates several genes expression. Before and during early lens development represses the CRYGF promoter by binding a SIX repressor element. Directly activates RHO transcription, or cooperates with CRX or NRL. Six3 also functions in the formation of the proximodistal axis of the optic cup, and promotes the formation of optic vesicles-like structures. During pituitary development, acts in parallel or alternatively with HESX1 to control cell proliferation through Wnt/beta-catenin pathway. Plays a role in eye development by suppressing WNT1 expression and in dorsal-ventral patterning by repressing BMP signaling pathway. The polypeptide is Homeobox protein SIX3 (SIX3) (Gallus gallus (Chicken)).